A 235-amino-acid polypeptide reads, in one-letter code: Aspartate/glutamate leucyltransferase (235 aa).

It belongs to the R-transferase family. Bpt subfamily.

It is found in the cytoplasm. It catalyses the reaction N-terminal L-glutamyl-[protein] + L-leucyl-tRNA(Leu) = N-terminal L-leucyl-L-glutamyl-[protein] + tRNA(Leu) + H(+). The enzyme catalyses N-terminal L-aspartyl-[protein] + L-leucyl-tRNA(Leu) = N-terminal L-leucyl-L-aspartyl-[protein] + tRNA(Leu) + H(+). Its function is as follows. Functions in the N-end rule pathway of protein degradation where it conjugates Leu from its aminoacyl-tRNA to the N-termini of proteins containing an N-terminal aspartate or glutamate. The sequence is that of Aspartate/glutamate leucyltransferase from Pseudomonas putida (strain ATCC 700007 / DSM 6899 / JCM 31910 / BCRC 17059 / LMG 24140 / F1).